Consider the following 145-residue polypeptide: D-aminoacyl-tRNA deacylase (145 aa).

The short motif at Gly-137 to Pro-138 is the Gly-cisPro motif, important for rejection of L-amino acids element.

This sequence belongs to the DTD family. As to quaternary structure, homodimer.

It localises to the cytoplasm. It carries out the reaction glycyl-tRNA(Ala) + H2O = tRNA(Ala) + glycine + H(+). The enzyme catalyses a D-aminoacyl-tRNA + H2O = a tRNA + a D-alpha-amino acid + H(+). In terms of biological role, an aminoacyl-tRNA editing enzyme that deacylates mischarged D-aminoacyl-tRNAs. Also deacylates mischarged glycyl-tRNA(Ala), protecting cells against glycine mischarging by AlaRS. Acts via tRNA-based rather than protein-based catalysis; rejects L-amino acids rather than detecting D-amino acids in the active site. By recycling D-aminoacyl-tRNA to D-amino acids and free tRNA molecules, this enzyme counteracts the toxicity associated with the formation of D-aminoacyl-tRNA entities in vivo and helps enforce protein L-homochirality. This chain is D-aminoacyl-tRNA deacylase, found in Pseudoalteromonas translucida (strain TAC 125).